The chain runs to 287 residues: Phosphatidylserine decarboxylase proenzyme (287 aa).

Active-site charge relay system; for autoendoproteolytic cleavage activity residues include Asp89, His146, and Ser252. Ser252 (schiff-base intermediate with substrate; via pyruvic acid; for decarboxylase activity) is an active-site residue. Position 252 is a pyruvic acid (Ser); by autocatalysis (Ser252).

This sequence belongs to the phosphatidylserine decarboxylase family. PSD-B subfamily. Prokaryotic type I sub-subfamily. Heterodimer of a large membrane-associated beta subunit and a small pyruvoyl-containing alpha subunit. Requires pyruvate as cofactor. Is synthesized initially as an inactive proenzyme. Formation of the active enzyme involves a self-maturation process in which the active site pyruvoyl group is generated from an internal serine residue via an autocatalytic post-translational modification. Two non-identical subunits are generated from the proenzyme in this reaction, and the pyruvate is formed at the N-terminus of the alpha chain, which is derived from the carboxyl end of the proenzyme. The autoendoproteolytic cleavage occurs by a canonical serine protease mechanism, in which the side chain hydroxyl group of the serine supplies its oxygen atom to form the C-terminus of the beta chain, while the remainder of the serine residue undergoes an oxidative deamination to produce ammonia and the pyruvoyl prosthetic group on the alpha chain. During this reaction, the Ser that is part of the protease active site of the proenzyme becomes the pyruvoyl prosthetic group, which constitutes an essential element of the active site of the mature decarboxylase.

It is found in the cell membrane. It catalyses the reaction a 1,2-diacyl-sn-glycero-3-phospho-L-serine + H(+) = a 1,2-diacyl-sn-glycero-3-phosphoethanolamine + CO2. It participates in phospholipid metabolism; phosphatidylethanolamine biosynthesis; phosphatidylethanolamine from CDP-diacylglycerol: step 2/2. In terms of biological role, catalyzes the formation of phosphatidylethanolamine (PtdEtn) from phosphatidylserine (PtdSer). In Shewanella pealeana (strain ATCC 700345 / ANG-SQ1), this protein is Phosphatidylserine decarboxylase proenzyme.